The sequence spans 240 residues: 1-(5-phosphoribosyl)-5-[(5-phosphoribosylamino)methylideneamino] imidazole-4-carboxamide isomerase (240 aa).

Asp9 functions as the Proton acceptor in the catalytic mechanism. Asp131 serves as the catalytic Proton donor.

It belongs to the HisA/HisF family.

Its subcellular location is the cytoplasm. It catalyses the reaction 1-(5-phospho-beta-D-ribosyl)-5-[(5-phospho-beta-D-ribosylamino)methylideneamino]imidazole-4-carboxamide = 5-[(5-phospho-1-deoxy-D-ribulos-1-ylimino)methylamino]-1-(5-phospho-beta-D-ribosyl)imidazole-4-carboxamide. It participates in amino-acid biosynthesis; L-histidine biosynthesis; L-histidine from 5-phospho-alpha-D-ribose 1-diphosphate: step 4/9. This chain is 1-(5-phosphoribosyl)-5-[(5-phosphoribosylamino)methylideneamino] imidazole-4-carboxamide isomerase, found in Cytophaga hutchinsonii (strain ATCC 33406 / DSM 1761 / CIP 103989 / NBRC 15051 / NCIMB 9469 / D465).